We begin with the raw amino-acid sequence, 312 residues long: Methionyl-tRNA formyltransferase (312 aa).

110-113 (SLLP) is a binding site for (6S)-5,6,7,8-tetrahydrofolate.

The protein belongs to the Fmt family.

The enzyme catalyses L-methionyl-tRNA(fMet) + (6R)-10-formyltetrahydrofolate = N-formyl-L-methionyl-tRNA(fMet) + (6S)-5,6,7,8-tetrahydrofolate + H(+). Its function is as follows. Attaches a formyl group to the free amino group of methionyl-tRNA(fMet). The formyl group appears to play a dual role in the initiator identity of N-formylmethionyl-tRNA by promoting its recognition by IF2 and preventing the misappropriation of this tRNA by the elongation apparatus. This chain is Methionyl-tRNA formyltransferase, found in Streptococcus suis (strain 05ZYH33).